Consider the following 201-residue polypeptide: FMN reductase (NADH) RutF 1 (201 aa).

The span at 167–195 shows a compositional bias: low complexity; the sequence is PRAPRSGSAPAEPARAARAVGARPAEGPA. Residues 167–201 form a disordered region; that stretch reads PRAPRSGSAPAEPARAARAVGARPAEGPALALRSA.

It belongs to the non-flavoprotein flavin reductase family. RutF subfamily.

It catalyses the reaction FMNH2 + NAD(+) = FMN + NADH + 2 H(+). In terms of biological role, catalyzes the reduction of FMN to FMNH2 which is used to reduce pyrimidine by RutA via the Rut pathway. The polypeptide is FMN reductase (NADH) RutF 1 (Methylorubrum extorquens (strain CM4 / NCIMB 13688) (Methylobacterium extorquens)).